The sequence spans 221 residues: Triosephosphate isomerase (221 aa).

8–10 (NLK) contributes to the substrate binding site. Catalysis depends on His-92, which acts as the Electrophile. The Proton acceptor role is filled by Glu-140. Substrate is bound by residues Ile-145, Gly-180, and 201–202 (AS).

The protein belongs to the triosephosphate isomerase family. As to quaternary structure, homotetramer; dimer of dimers.

The protein localises to the cytoplasm. It catalyses the reaction D-glyceraldehyde 3-phosphate = dihydroxyacetone phosphate. It functions in the pathway carbohydrate biosynthesis; gluconeogenesis. Its pathway is carbohydrate degradation; glycolysis; D-glyceraldehyde 3-phosphate from glycerone phosphate: step 1/1. Involved in the gluconeogenesis. Catalyzes stereospecifically the conversion of dihydroxyacetone phosphate (DHAP) to D-glyceraldehyde-3-phosphate (G3P). The sequence is that of Triosephosphate isomerase from Methanococcoides burtonii (strain DSM 6242 / NBRC 107633 / OCM 468 / ACE-M).